Here is a 66-residue protein sequence, read N- to C-terminus: Stress-induced protein KIN2 (66 aa).

The span at 1-10 (MSETNKNAFQ) shows a compositional bias: polar residues. A disordered region spans residues 1–20 (MSETNKNAFQAGQAAGKAEE). 2 repeats span residues 31–35 (DAAAA) and 49–53 (DAAVG).

In terms of assembly, interacts with DEK3. Expressed at high levels in embryos and mature seeds.

This chain is Stress-induced protein KIN2, found in Arabidopsis thaliana (Mouse-ear cress).